Here is a 205-residue protein sequence, read N- to C-terminus: Isochorismatase domain-containing protein 2 (205 aa).

Belongs to the isochorismatase family. In terms of assembly, interacts with CDKN2A.

Its subcellular location is the cytoplasm. It localises to the nucleus. This chain is Isochorismatase domain-containing protein 2 (ISOC2), found in Macaca fascicularis (Crab-eating macaque).